The chain runs to 737 residues: Polyribonucleotide nucleotidyltransferase (737 aa).

Positions 514 and 520 each coordinate Mg(2+). Residues 580-639 (PRIITVKIPVDKIGEVIGPKGKMINQIQEDTGADITIEDDGTIYIGAQAGSQAEAARATI) enclose the KH domain. Residues 651-723 (GERYLGTVVK…SRGKLSLIPV (73 aa)) form the S1 motif domain.

The protein belongs to the polyribonucleotide nucleotidyltransferase family. Mg(2+) is required as a cofactor.

Its subcellular location is the cytoplasm. It carries out the reaction RNA(n+1) + phosphate = RNA(n) + a ribonucleoside 5'-diphosphate. In terms of biological role, involved in mRNA degradation. Catalyzes the phosphorolysis of single-stranded polyribonucleotides processively in the 3'- to 5'-direction. This Streptomyces griseus subsp. griseus (strain JCM 4626 / CBS 651.72 / NBRC 13350 / KCC S-0626 / ISP 5235) protein is Polyribonucleotide nucleotidyltransferase.